The primary structure comprises 448 residues: Amino-acid acetyltransferase (448 aa).

Positions 295-433 constitute an N-acetyltransferase domain; sequence EQIRRANIND…KQVLYNYQRR (139 aa).

The protein belongs to the acetyltransferase family. ArgA subfamily. Homohexamer.

The protein resides in the cytoplasm. It catalyses the reaction L-glutamate + acetyl-CoA = N-acetyl-L-glutamate + CoA + H(+). Its pathway is amino-acid biosynthesis; L-arginine biosynthesis; N(2)-acetyl-L-ornithine from L-glutamate: step 1/4. This Photorhabdus laumondii subsp. laumondii (strain DSM 15139 / CIP 105565 / TT01) (Photorhabdus luminescens subsp. laumondii) protein is Amino-acid acetyltransferase.